The sequence spans 352 residues: Photosystem II D2 protein (352 aa).

At 1-31 the chain is on the cytoplasmic side; it reads MTIAVGRAPVERGWFDVLDDWLKRDRFVFIG. A helical membrane pass occupies residues 32-53; that stretch reads WSGLLLFPCAFMALGGWLTGTT. Residues 54–108 are Lumenal, thylakoid-facing; that stretch reads FVTSWYTHGLASSYLEGANFLTVAVSSPADAFGHSLLFLWGPEAQGNLTRWFQIG. Residues 109–131 form a helical membrane-spanning segment; it reads GLWPFVALHGAFGLIGFMLRQFE. Chlorophyll a is bound at residue His117. Gln129 contributes to the pheophytin a binding site. The Cytoplasmic portion of the chain corresponds to 132–140; that stretch reads ISRLVGIRP. The chain crosses the membrane as a helical span at residues 141 to 162; sequence YNAIAFSGPIAVFVSVFLMYPL. Asn142 contacts pheophytin a. Over 163 to 190 the chain is Lumenal, thylakoid; it reads GQSSWFFAPSFGVAGIFRFILFLQGFHN. Residues 191 to 217 traverse the membrane as a helical segment; sequence WTLNPFHMMGVAGILGGALLCAIHGAT. His197 serves as a coordination point for chlorophyll a. Positions 214 and 261 each coordinate a plastoquinone. His214 contributes to the Fe cation binding site. Residues 218 to 265 lie on the Cytoplasmic side of the membrane; sequence VENTLFEDGEDSNTFRAFEPTQAEETYSMVTANRFWSQIFGIAFSNKR. A helical transmembrane segment spans residues 266 to 288; that stretch reads WLHFFMLFVPVTGLWMSSVGIVG. A Fe cation-binding site is contributed by His268. Topologically, residues 289–352 are lumenal, thylakoid; that stretch reads LALNLRAYDF…EEVLPRGNAL (64 aa).

It belongs to the reaction center PufL/M/PsbA/D family. As to quaternary structure, PSII is composed of 1 copy each of membrane proteins PsbA, PsbB, PsbC, PsbD, PsbE, PsbF, PsbH, PsbI, PsbJ, PsbK, PsbL, PsbM, PsbT, PsbX, PsbY, PsbZ, Psb30/Ycf12, peripheral proteins PsbO, CyanoQ (PsbQ), PsbU, PsbV and a large number of cofactors. It forms dimeric complexes. Requires The D1/D2 heterodimer binds P680, chlorophylls that are the primary electron donor of PSII, and subsequent electron acceptors. It shares a non-heme iron and each subunit binds pheophytin, quinone, additional chlorophylls, carotenoids and lipids. There is also a Cl(-1) ion associated with D1 and D2, which is required for oxygen evolution. The PSII complex binds additional chlorophylls, carotenoids and specific lipids. as cofactor.

The protein resides in the cellular thylakoid membrane. The enzyme catalyses 2 a plastoquinone + 4 hnu + 2 H2O = 2 a plastoquinol + O2. Its function is as follows. Photosystem II (PSII) is a light-driven water:plastoquinone oxidoreductase that uses light energy to abstract electrons from H(2)O, generating O(2) and a proton gradient subsequently used for ATP formation. It consists of a core antenna complex that captures photons, and an electron transfer chain that converts photonic excitation into a charge separation. The D1/D2 (PsbA/PsbD) reaction center heterodimer binds P680, the primary electron donor of PSII as well as several subsequent electron acceptors. D2 is needed for assembly of a stable PSII complex. This chain is Photosystem II D2 protein, found in Synechocystis sp. (strain ATCC 27184 / PCC 6803 / Kazusa).